Reading from the N-terminus, the 160-residue chain is Putative UPF0479 protein YIL177W-A (160 aa).

2 consecutive transmembrane segments (helical) span residues 39 to 59 and 136 to 156; these read IVFC…KVLQ and VPMI…ISQH.

Belongs to the UPF0479 family.

It localises to the membrane. The protein is Putative UPF0479 protein YIL177W-A of Saccharomyces cerevisiae (strain ATCC 204508 / S288c) (Baker's yeast).